Here is a 343-residue protein sequence, read N- to C-terminus: MSNTDKERAIAAALAQIEKSYGKGSVMKLGQRPHVDIEAVSTGSLGLDIALGIGGVPKGRIIEIFGPESSGKTTLTLHLIAEAQKKGGTCAFIDAEHALDPAYAKKLGVNIDELIISQPDTGEQALEIADTLIRSSGIDMIIIDSVAALVPKSEIEGEMGDAQMASQARLMSQALRKLTASINRTNCIAVFINQIRMKIGVMFGSPETTTGGNALKFYASVRIDIRRIGSIKDKEEVIGSQTKVKVVKNKVSPPFKTADFDIMYGSGISKEGEIIDLGVKLDIVEKSGSWFSYKNVRIGQGRENVKQYLKEHPQISNEIEKIIREKSSKITNINLDQTEEEND.

66-73 is an ATP binding site; that stretch reads GPESSGKT.

Belongs to the RecA family.

It is found in the cytoplasm. Its function is as follows. Can catalyze the hydrolysis of ATP in the presence of single-stranded DNA, the ATP-dependent uptake of single-stranded DNA by duplex DNA, and the ATP-dependent hybridization of homologous single-stranded DNAs. It interacts with LexA causing its activation and leading to its autocatalytic cleavage. The chain is Protein RecA from Rickettsia africae (strain ESF-5).